The chain runs to 312 residues: Methionyl-tRNA formyltransferase (312 aa).

110-113 (SLLP) serves as a coordination point for (6S)-5,6,7,8-tetrahydrofolate.

This sequence belongs to the Fmt family.

The enzyme catalyses L-methionyl-tRNA(fMet) + (6R)-10-formyltetrahydrofolate = N-formyl-L-methionyl-tRNA(fMet) + (6S)-5,6,7,8-tetrahydrofolate + H(+). In terms of biological role, attaches a formyl group to the free amino group of methionyl-tRNA(fMet). The formyl group appears to play a dual role in the initiator identity of N-formylmethionyl-tRNA by promoting its recognition by IF2 and preventing the misappropriation of this tRNA by the elongation apparatus. In Koribacter versatilis (strain Ellin345), this protein is Methionyl-tRNA formyltransferase.